We begin with the raw amino-acid sequence, 529 residues long: Cytochrome P450 monooxygenase patI (529 aa).

At 1–8 (MDFTQVPP) the chain is on the cytoplasmic side. A helical membrane pass occupies residues 9-25 (SYILGVLLSSTSILFCL). Topologically, residues 26–529 (KYLLRSGYRP…EAQGVFSRFD (504 aa)) are lumenal. N-linked (GlcNAc...) asparagine glycans are attached at residues N81 and N383. C449 serves as a coordination point for heme.

The protein belongs to the cytochrome P450 family. Heme is required as a cofactor.

Its subcellular location is the endoplasmic reticulum membrane. It catalyses the reaction 3-hydroxybenzyl alcohol + reduced [NADPH--hemoprotein reductase] + O2 = gentisyl alcohol + oxidized [NADPH--hemoprotein reductase] + H2O + H(+). Its pathway is mycotoxin biosynthesis; patulin biosynthesis. Its function is as follows. Cytochrome P450 monooxygenase; part of the gene cluster that mediates the biosynthesis of patulin, an acetate-derived tetraketide mycotoxin produced by several fungal species that shows antimicrobial properties against several bacteria. PatI catalyzes the conversion of m-hydroxybenzyl alcohol into gentisyl alcohol. The pathway begins with the synthesis of 6-methylsalicylic acid by the polyketide synthase (PKS) patK via condensation of acetate and malonate units. The 6-methylsalicylic acid decarboxylase patG then catalyzes the decarboxylation of 6-methylsalicylic acid to yield m-cresol (also known as 3-methylphenol). These first reactions occur in the cytosol. The intermediate m-cresol is then transported into the endoplasmic reticulum where the cytochrome P450 monooxygenase patH converts it to m-hydroxybenzyl alcohol, which is further converted to gentisyl alcohol by the cytochrome P450 monooxygenase patI. The oxidoreductases patJ and patO further convert gentisyl alcohol to isoepoxydon in the vacuole. PatN catalyzes then the transformation of isoepoxydon into phyllostine. The cluster protein patF is responsible for the conversion from phyllostine to neopatulin whereas the alcohol dehydrogenase patD converts neopatulin to E-ascladiol. The steps between isoepoxydon and E-ascladiol occur in the cytosol, and E-ascladiol is probably secreted to the extracellular space by one of the cluster-specific transporters patC or patM. Finally, the secreted patulin synthase patE catalyzes the conversion of E-ascladiol to patulin. This Aspergillus clavatus (strain ATCC 1007 / CBS 513.65 / DSM 816 / NCTC 3887 / NRRL 1 / QM 1276 / 107) protein is Cytochrome P450 monooxygenase patI.